The chain runs to 879 residues: Alanine--tRNA ligase (879 aa).

Zn(2+)-binding residues include His-567, His-571, Cys-669, and His-673.

This sequence belongs to the class-II aminoacyl-tRNA synthetase family. Requires Zn(2+) as cofactor.

The protein resides in the cytoplasm. The catalysed reaction is tRNA(Ala) + L-alanine + ATP = L-alanyl-tRNA(Ala) + AMP + diphosphate. Its function is as follows. Catalyzes the attachment of alanine to tRNA(Ala) in a two-step reaction: alanine is first activated by ATP to form Ala-AMP and then transferred to the acceptor end of tRNA(Ala). Also edits incorrectly charged Ser-tRNA(Ala) and Gly-tRNA(Ala) via its editing domain. The sequence is that of Alanine--tRNA ligase from Lactobacillus helveticus (strain DPC 4571).